A 314-amino-acid polypeptide reads, in one-letter code: 4-hydroxy-3-methylbut-2-enyl diphosphate reductase (314 aa).

C12 contacts [4Fe-4S] cluster. The (2E)-4-hydroxy-3-methylbut-2-enyl diphosphate site is built by H41 and H74. Residues H41 and H74 each coordinate dimethylallyl diphosphate. The isopentenyl diphosphate site is built by H41 and H74. C96 is a binding site for [4Fe-4S] cluster. H124 provides a ligand contact to (2E)-4-hydroxy-3-methylbut-2-enyl diphosphate. H124 serves as a coordination point for dimethylallyl diphosphate. H124 is a binding site for isopentenyl diphosphate. E126 acts as the Proton donor in catalysis. (2E)-4-hydroxy-3-methylbut-2-enyl diphosphate is bound at residue T167. [4Fe-4S] cluster is bound at residue C197. (2E)-4-hydroxy-3-methylbut-2-enyl diphosphate contacts are provided by S225, S226, N227, and S269. Positions 225, 226, 227, and 269 each coordinate dimethylallyl diphosphate. Isopentenyl diphosphate is bound by residues S225, S226, N227, and S269.

It belongs to the IspH family. The cofactor is [4Fe-4S] cluster.

The catalysed reaction is isopentenyl diphosphate + 2 oxidized [2Fe-2S]-[ferredoxin] + H2O = (2E)-4-hydroxy-3-methylbut-2-enyl diphosphate + 2 reduced [2Fe-2S]-[ferredoxin] + 2 H(+). The enzyme catalyses dimethylallyl diphosphate + 2 oxidized [2Fe-2S]-[ferredoxin] + H2O = (2E)-4-hydroxy-3-methylbut-2-enyl diphosphate + 2 reduced [2Fe-2S]-[ferredoxin] + 2 H(+). It functions in the pathway isoprenoid biosynthesis; dimethylallyl diphosphate biosynthesis; dimethylallyl diphosphate from (2E)-4-hydroxy-3-methylbutenyl diphosphate: step 1/1. Its pathway is isoprenoid biosynthesis; isopentenyl diphosphate biosynthesis via DXP pathway; isopentenyl diphosphate from 1-deoxy-D-xylulose 5-phosphate: step 6/6. Catalyzes the conversion of 1-hydroxy-2-methyl-2-(E)-butenyl 4-diphosphate (HMBPP) into a mixture of isopentenyl diphosphate (IPP) and dimethylallyl diphosphate (DMAPP). Acts in the terminal step of the DOXP/MEP pathway for isoprenoid precursor biosynthesis. This chain is 4-hydroxy-3-methylbut-2-enyl diphosphate reductase, found in Actinobacillus succinogenes (strain ATCC 55618 / DSM 22257 / CCUG 43843 / 130Z).